Consider the following 158-residue polypeptide: Small ribosomal subunit protein uS7 (158 aa).

This sequence belongs to the universal ribosomal protein uS7 family. In terms of assembly, part of the 30S ribosomal subunit. Contacts proteins S9 and S11.

In terms of biological role, one of the primary rRNA binding proteins, it binds directly to 16S rRNA where it nucleates assembly of the head domain of the 30S subunit. Is located at the subunit interface close to the decoding center, probably blocks exit of the E-site tRNA. This chain is Small ribosomal subunit protein uS7, found in Porphyromonas gingivalis (strain ATCC 33277 / DSM 20709 / CIP 103683 / JCM 12257 / NCTC 11834 / 2561).